The chain runs to 39 residues: U1-nemetoxin-Csp1c (39 aa).

4 disulfide bridges follow: cysteine 1-cysteine 15, cysteine 8-cysteine 19, cysteine 14-cysteine 36, and cysteine 25-cysteine 32.

Expressed by the venom gland.

The protein resides in the secreted. In terms of biological role, causes paralysis to insect larvae (H.virescens). This toxin is active only on insects. The protein is U1-nemetoxin-Csp1c of Calisoga sp. (Spider).